Consider the following 181-residue polypeptide: Adenine phosphoribosyltransferase (181 aa).

It belongs to the purine/pyrimidine phosphoribosyltransferase family. Homodimer.

It localises to the cytoplasm. The enzyme catalyses AMP + diphosphate = 5-phospho-alpha-D-ribose 1-diphosphate + adenine. The protein operates within purine metabolism; AMP biosynthesis via salvage pathway; AMP from adenine: step 1/1. Catalyzes a salvage reaction resulting in the formation of AMP, that is energically less costly than de novo synthesis. The sequence is that of Adenine phosphoribosyltransferase from Brucella suis (strain ATCC 23445 / NCTC 10510).